A 273-amino-acid chain; its full sequence is MNDSQAIIEEAFERRAEISPRKAETLVKDAVEEALHLLDTGEARVAEKQNGEWIVNEWLKKAVLLSFRLSDNVFIKGGYTNYFDKVPSKYADYSSRDFRQDEVRIVPPASVRKGAFIAPSVVLMPSYVNIGAYVDRGTMVDTWATVGSCAQIGKNVHLSGGVGIGGVLEPLQAKPTIIEDNCFIGARSEIVEGVIVEEGSVISMGVFIGQSTRIYHRETGTISYGRVPAGSVVVPGNLPSQDGKYSLYCAIIVKQVDERTRSKVGINELLRNI.

Substrate-binding residues include Arg-104 and Asp-141.

It belongs to the transferase hexapeptide repeat family. In terms of assembly, homotrimer.

It is found in the cytoplasm. It carries out the reaction (S)-2,3,4,5-tetrahydrodipicolinate + succinyl-CoA + H2O = (S)-2-succinylamino-6-oxoheptanedioate + CoA. It functions in the pathway amino-acid biosynthesis; L-lysine biosynthesis via DAP pathway; LL-2,6-diaminopimelate from (S)-tetrahydrodipicolinate (succinylase route): step 1/3. The chain is 2,3,4,5-tetrahydropyridine-2,6-dicarboxylate N-succinyltransferase from Nitrosococcus oceani (strain ATCC 19707 / BCRC 17464 / JCM 30415 / NCIMB 11848 / C-107).